The primary structure comprises 658 residues: Glycogen debranching enzyme (658 aa).

D336 acts as the Nucleophile in catalysis. E371 acts as the Proton donor in catalysis.

Belongs to the glycosyl hydrolase 13 family.

It carries out the reaction Hydrolysis of (1-&gt;6)-alpha-D-glucosidic linkages to branches with degrees of polymerization of three or four glucose residues in limit dextrin.. The protein operates within glycan degradation; glycogen degradation. Functionally, removes maltotriose and maltotetraose chains that are attached by 1,6-alpha-linkage to the limit dextrin main chain, generating a debranched limit dextrin. The polypeptide is Glycogen debranching enzyme (Klebsiella pneumoniae (strain 342)).